The primary structure comprises 356 residues: Isocitrate dehydrogenase [NAD] subunit 1, mitochondrial (356 aa).

Residues R106, R137, and D224 each coordinate substrate. D224 serves as a coordination point for Mg(2+).

The protein belongs to the isocitrate and isopropylmalate dehydrogenases family. Octamer of two non-identical subunits IDH1 and IDH2. The cofactor is Mg(2+). It depends on Mn(2+) as a cofactor.

It is found in the mitochondrion. The catalysed reaction is D-threo-isocitrate + NAD(+) = 2-oxoglutarate + CO2 + NADH. Its function is as follows. Performs an essential role in the oxidative function of the citric acid cycle. Also binds RNA; specifically to the 5'-untranslated leaders of mitochondrial mRNAs. This Schizosaccharomyces pombe (strain 972 / ATCC 24843) (Fission yeast) protein is Isocitrate dehydrogenase [NAD] subunit 1, mitochondrial (idh1).